Consider the following 312-residue polypeptide: Ribosomal protein L11 methyltransferase (312 aa).

The S-adenosyl-L-methionine site is built by threonine 162, glycine 183, aspartate 205, and asparagine 248.

Belongs to the methyltransferase superfamily. PrmA family.

It is found in the cytoplasm. It carries out the reaction L-lysyl-[protein] + 3 S-adenosyl-L-methionine = N(6),N(6),N(6)-trimethyl-L-lysyl-[protein] + 3 S-adenosyl-L-homocysteine + 3 H(+). In terms of biological role, methylates ribosomal protein L11. This chain is Ribosomal protein L11 methyltransferase, found in Bacillus anthracis (strain A0248).